The primary structure comprises 556 residues: Arginine--tRNA ligase (556 aa).

Positions 132-142 (ANPTGDLHLGH) match the 'HIGH' region motif.

It belongs to the class-I aminoacyl-tRNA synthetase family. As to quaternary structure, monomer.

The protein localises to the cytoplasm. It carries out the reaction tRNA(Arg) + L-arginine + ATP = L-arginyl-tRNA(Arg) + AMP + diphosphate. This is Arginine--tRNA ligase (argS) from Bacillus subtilis (strain 168).